A 440-amino-acid polypeptide reads, in one-letter code: Thymidine phosphorylase (440 aa).

This sequence belongs to the thymidine/pyrimidine-nucleoside phosphorylase family. As to quaternary structure, homodimer.

It catalyses the reaction thymidine + phosphate = 2-deoxy-alpha-D-ribose 1-phosphate + thymine. It participates in pyrimidine metabolism; dTMP biosynthesis via salvage pathway; dTMP from thymine: step 1/2. In terms of biological role, the enzymes which catalyze the reversible phosphorolysis of pyrimidine nucleosides are involved in the degradation of these compounds and in their utilization as carbon and energy sources, or in the rescue of pyrimidine bases for nucleotide synthesis. In Salmonella heidelberg (strain SL476), this protein is Thymidine phosphorylase.